Consider the following 317-residue polypeptide: Periplasmic [NiFe] hydrogenase small subunit 1 (317 aa).

Residues 1-49 (MRFSVGLGKEGAEERLARRGVSRRDFLKFCTAIAVTMGMGPAFAPEVAR) constitute a signal peptide (tat-type signal). [4Fe-4S] cluster is bound by residues Cys67, Cys70, Cys164, Cys200, His238, Cys241, Cys266, and Cys272. Residues Cys281, Cys299, and Cys302 each coordinate [3Fe-4S] cluster.

It belongs to the [NiFe]/[NiFeSe] hydrogenase small subunit family. In terms of assembly, heterodimer of a large and a small subunit. The cofactor is [3Fe-4S] cluster. It depends on [4Fe-4S] cluster as a cofactor. In terms of processing, predicted to be exported by the Tat system. The position of the signal peptide cleavage has not been experimentally proven.

It localises to the periplasm. The enzyme catalyses 2 Fe(III)-[cytochrome c3] + H2 = 2 Fe(II)-[cytochrome c3] + 2 H(+). The protein is Periplasmic [NiFe] hydrogenase small subunit 1 (hynB1) of Nitratidesulfovibrio vulgaris (strain ATCC 29579 / DSM 644 / CCUG 34227 / NCIMB 8303 / VKM B-1760 / Hildenborough) (Desulfovibrio vulgaris).